The following is a 461-amino-acid chain: Chromosomal replication initiator protein DnaA (461 aa).

Positions 1 to 84 are domain I, interacts with DnaA modulators; that stretch reads MAVSLWQQCI…RFDIGSRPSA (84 aa). Residues 84-124 are domain II; sequence AKKFEPAPVATVRAPNTQTKATVGTYFNTQAEPIANANHRS. The domain III, AAA+ region stretch occupies residues 125-341; the sequence is NINPTYQFDN…GALNRVIANA (217 aa). Residues Gly-169, Gly-171, Lys-172, and Thr-173 each coordinate ATP. The interval 342-461 is domain IV, binds dsDNA; that stretch reads NFTGRPITID…YANLIRTLSS (120 aa).

This sequence belongs to the DnaA family. In terms of assembly, oligomerizes as a right-handed, spiral filament on DNA at oriC.

The protein resides in the cytoplasm. Plays an essential role in the initiation and regulation of chromosomal replication. ATP-DnaA binds to the origin of replication (oriC) to initiate formation of the DNA replication initiation complex once per cell cycle. Binds the DnaA box (a 9 base pair repeat at the origin) and separates the double-stranded (ds)DNA. Forms a right-handed helical filament on oriC DNA; dsDNA binds to the exterior of the filament while single-stranded (ss)DNA is stabiized in the filament's interior. The ATP-DnaA-oriC complex binds and stabilizes one strand of the AT-rich DNA unwinding element (DUE), permitting loading of DNA polymerase. After initiation quickly degrades to an ADP-DnaA complex that is not apt for DNA replication. Binds acidic phospholipids. The chain is Chromosomal replication initiator protein DnaA from Shewanella putrefaciens (strain CN-32 / ATCC BAA-453).